The following is a 346-amino-acid chain: Methionine import ATP-binding protein MetN 1 (346 aa).

Residues 2 to 241 (IEFKQVTKTF…PQHPTTEKFV (240 aa)) form the ABC transporter domain. Residue 38-45 (GFSGAGKS) coordinates ATP.

It belongs to the ABC transporter superfamily. Methionine importer (TC 3.A.1.24) family. The complex is composed of two ATP-binding proteins (MetN), two transmembrane proteins (MetI) and a solute-binding protein (MetQ).

The protein localises to the cell membrane. It catalyses the reaction L-methionine(out) + ATP + H2O = L-methionine(in) + ADP + phosphate + H(+). The enzyme catalyses D-methionine(out) + ATP + H2O = D-methionine(in) + ADP + phosphate + H(+). Its function is as follows. Part of the ABC transporter complex MetNIQ involved in methionine import. Responsible for energy coupling to the transport system. This Shouchella clausii (strain KSM-K16) (Alkalihalobacillus clausii) protein is Methionine import ATP-binding protein MetN 1.